The following is a 300-amino-acid chain: NAD kinase (300 aa).

Asp75 serves as the catalytic Proton acceptor. NAD(+) contacts are provided by residues 75 to 76 (DG), 149 to 150 (ND), Arg177, Asp179, 190 to 195 (TAYALS), Ala214, and Gln248.

It belongs to the NAD kinase family. Requires a divalent metal cation as cofactor.

It is found in the cytoplasm. The catalysed reaction is NAD(+) + ATP = ADP + NADP(+) + H(+). Functionally, involved in the regulation of the intracellular balance of NAD and NADP, and is a key enzyme in the biosynthesis of NADP. Catalyzes specifically the phosphorylation on 2'-hydroxyl of the adenosine moiety of NAD to yield NADP. In Burkholderia mallei (strain SAVP1), this protein is NAD kinase.